A 968-amino-acid polypeptide reads, in one-letter code: Catenin delta-1 (968 aa).

Methionine 1 carries the N-acetylmethionine modification. Positions 1–357 are necessary and sufficient for interaction with CCDC85B; that stretch reads MDDSEVESTA…ASLDSLRKGG (357 aa). Serine 4 is subject to Phosphoserine. A coiled-coil region spans residues 10–46; that stretch reads ASILASVKEQEAQFEKLTRALEEERRHVSAQLERVRV. Serine 47 is subject to Phosphoserine. Position 59 is a phosphothreonine (threonine 59). Phosphotyrosine; by FYN is present on tyrosine 112. Serine 125 carries the phosphoserine modification. Phosphotyrosine is present on residues tyrosine 217 and tyrosine 221. Serine 225 bears the Phosphoserine mark. At tyrosine 228 the chain carries Phosphotyrosine. Residues serine 230 and serine 252 each carry the phosphoserine modification. Tyrosine 257 is modified (phosphotyrosine). Phosphoserine occurs at positions 268 and 269. Phosphotyrosine is present on tyrosine 280. Serine 288 carries the phosphoserine; by PAK5 modification. Tyrosine 291 carries the phosphotyrosine modification. A Nuclear localization signal (NLS) motif is present at residues 299 to 306; that stretch reads MSDYGTAR. At serine 300 the chain carries Phosphoserine. Residue threonine 304 is modified to Phosphothreonine. Phosphoserine occurs at positions 320, 346, 349, and 352. ARM repeat units follow at residues 358-395, 398-437, 441-475, and 476-516; these read PPPP…HLCY, DKVK…NISF, QDNK…ITGT, and LWNL…NEDC. Lysine 421 is covalently cross-linked (Glycyl lysine isopeptide (Lys-Gly) (interchain with G-Cter in SUMO2)). Lysine 517 is covalently cross-linked (Glycyl lysine isopeptide (Lys-Gly) (interchain with G-Cter in SUMO2)). Positions 521-528 match the Nuclear localization signal (NLS) motif; sequence IEWESVLT. ARM repeat units lie at residues 534-573, 583-624, 653-693, 700-739, 740-780, and 781-826; these read LRNV…DSDS, LRNL…AKKG, ARGY…NLCA, RYIR…NLAV, DARN…SILN, and TINE…ALVL. Isoleucine 566, aspartate 572, serine 587, and glutamate 593 each carry phosphothreonine. The Nuclear localization signal (NLS) signature appears at 568-575; it reads QKDSDSKL. Position 617 is a phosphoserine (serine 617). The Nuclear localization signal (NLS) motif lies at 622 to 629; sequence KKGKDEWF. Serine 713 carries the phosphoserine modification. A phosphothreonine mark is found at glutamate 788, lysine 794, and asparagine 809. Serine 811 is subject to Phosphoserine. A phosphothreonine mark is found at serine 815, leucine 835, and lysine 841. Serine 847 carries the phosphoserine modification. Residues 855–944 form a disordered region; sequence NASRSQSSHS…LMQDEGQESL (90 aa). Alanine 856 is modified (phosphothreonine). Serine 857, serine 859, and serine 861 each carry phosphoserine. Serine 862 is modified (phosphothreonine). Phosphoserine is present on serine 864. Tyrosine 865 is modified (phosphotyrosine). Serine 868 carries the phosphoserine modification. Position 869 is a phosphothreonine (threonine 869). Residues 875 to 888 are compositionally biased toward basic and acidic residues; the sequence is RNQKSDKKPDREEI. Serine 879 carries the post-translational modification Phosphoserine. Lysine 882 participates in a covalent cross-link: Glycyl lysine isopeptide (Lys-Gly) (interchain with G-Cter in SUMO2). Glutamine 889 and serine 895 each carry phosphothreonine. Over residues 889-908 the composition is skewed to polar residues; sequence QMSNMGSNTKSLDNNYSTPN. The residue at position 899 (serine 899) is a Phosphoserine. Phosphotyrosine is present on tyrosine 904. Phosphothreonine is present on residues threonine 906, arginine 910, and threonine 916. Residues 909 to 922 are compositionally biased toward basic and acidic residues; it reads ERGDHNRTLDRSGD. Phosphoserine is present on residues serine 920 and serine 943.

It belongs to the beta-catenin family. As to quaternary structure, belongs to a multiprotein cell-cell adhesion complex that also contains E-cadherin/CDH1, alpha-catenin/CTNNA1, beta-catenin/CTNNB1, and gamma-catenin/JUP. Component of a cadherin:catenin adhesion complex composed of at least of CDH26, beta-catenin/CTNNB1, alpha-catenin/CTNNA1 and p120 catenin/CTNND1. Binds to the C-terminal fragment of PSEN1 and mutually competes for CDH1. Interacts with ZBTB33. Interacts with GLIS2. Interacts with FER. Interacts with NANOS1 (via N-terminal region). Interacts (via N-terminus) with GNA12; the interaction regulates CDH1-mediated cell-cell adhesion. Interacts with GNA13. Interacts with CCDC85B. Interacts with PLPP3; negatively regulates the PLPP3-mediated stabilization of CTNNB1. Interacts with DSG3; the interaction facilitates DSG3 localization and retention at cell-cell junctions. Interacts with CTNND1/p120-catenin; the interaction controls CADH5 endocytosis. Phosphorylated by FER and other protein-tyrosine kinases. Phosphorylated at Ser-288 by PAK5. Dephosphorylated by PTPRJ. In terms of tissue distribution, expressed in vascular endothelium. Melanocytes and melanoma cells primarily express the long isoform 1A, whereas keratinocytes express shorter isoforms, especially 3A. The shortest isoform 4A, is detected in normal keratinocytes and melanocytes, and generally lost from cells derived from squamous cell carcinomas or melanomas. The C-terminal alternatively spliced exon B is present in the p120ctn transcripts in the colon, intestine and prostate, but lost in several tumor tissues derived from these organs.

It localises to the cell junction. It is found in the adherens junction. The protein localises to the cytoplasm. The protein resides in the nucleus. Its subcellular location is the cell membrane. Its function is as follows. Key regulator of cell-cell adhesion that associates with and regulates the cell adhesion properties of both C-, E- and N-cadherins, being critical for their surface stability. Promotes localization and retention of DSG3 at cell-cell junctions, via its interaction with DSG3. Beside cell-cell adhesion, regulates gene transcription through several transcription factors including ZBTB33/Kaiso2 and GLIS2, and the activity of Rho family GTPases and downstream cytoskeletal dynamics. Implicated both in cell transformation by SRC and in ligand-induced receptor signaling through the EGF, PDGF, CSF-1 and ERBB2 receptors. This is Catenin delta-1 from Homo sapiens (Human).